A 495-amino-acid chain; its full sequence is MFLQIVTSVLATGLLYALISVLQQNRTLSASLPPGPPGHWLFGNAPPKAFPYRHFAELTETYGPVFTLRFGRRIVCVIGRYQAAVDILMKHSAETSDRPRSVAANEIMSKGHRVLMTPAGERLKKYRRALHAFLQPSSSATYKPMQYKNAKNYVLDCLHDGGHHLDHGRKYAASVVMSVAYGKTTPTSYSDPEVLQINKSLARLGAALKPGAYLVDTYPILKYCPGYASHLRRYREEELALITKQANAVRELLAKGEAPPSFTAYLIENQERLGISDDELAYLSGAIFGAGSDTTAAALGIMTMAAACYPEAQARVQAQLDEVVGRDRAPTFEDEDLLPEVTAFVLEAYRWRPVSAGGFSHRATKDVVWNGYVIPAGAEIIGNHWAISRDPEVYPNPEDFKPARWLNEHGRVRNDLKFTNFGFGRRVCVGQHVADQSLFINTALVLWAFIISQDAQCPIDTYAFTDTANVHPLPFSLHFEPRVKDMEAMLGAQAE.

Residues 2 to 22 (FLQIVTSVLATGLLYALISVL) traverse the membrane as a helical segment. 2 N-linked (GlcNAc...) asparagine glycosylation sites follow: asparagine 25 and asparagine 198. Residue cysteine 428 participates in heme binding.

It belongs to the cytochrome P450 family. It depends on heme as a cofactor.

It is found in the membrane. The protein operates within secondary metabolite biosynthesis. Its function is as follows. Cytochrome P450 monooxygenase that is able to use 4-ethoxybenzoic acid as a substrate for oxidation. The polypeptide is Cytochrome P450 monooxygenase 88 (Postia placenta (strain ATCC 44394 / Madison 698-R) (Brown rot fungus)).